The sequence spans 265 residues: Pre-protein VI (265 aa).

A propeptide spanning residues 1–33 is cleaved from the precursor; it reads MEDINFSSLAPRHGTRPYMGTWNEIGTSQLNGG. An amphipathic alpha-helix essential for membrane lytic activity region spans residues 34 to 54; it reads AFNWNSIWSGLKNFGSTIKTY. The segment at 36–53 is involved in endosomal membrane lysis; sequence NWNSIWSGLKNFGSTIKT. Residues 48 to 74 are interaction with hexon protein; the sequence is GSTIKTYGTKAWNSQTGQMLRDKLKDQ. Residues 67–76 carry the Nuclear export signal motif; that stretch reads LRDKLKDQNF. Residues 123–155 are disordered; it reads LETVPGSVPTKGEKRPRPDAEETLVTHTTEPPS. Over residues 133 to 142 the composition is skewed to basic and acidic residues; that stretch reads KGEKRPRPDA. Positions 136-140 match the Nuclear localization signal motif; the sequence is KRPRP. Thr-148 carries the phosphothreonine; by host modification. Residues 153 to 156 carry the PPXY motif motif; sequence PPSY. The short motif at 246 to 257 is the Nuclear export signal element; sequence STLNSIVGLGVK. The tract at residues 248-254 is interaction with hexon protein; it reads LNSIVGL. A binds to importin alpha/beta, involved in hexon nuclear import region spans residues 255 to 265; sequence GVKSLKRRRCY. A Nuclear localization signal motif is present at residues 260–263; that stretch reads KRRR.

The protein belongs to the adenoviridae protein VI family. As to quaternary structure, interacts with hexon protein; this interaction allows nuclear import of hexon trimers and possibly pre-capsid assembly. Interacts (via C-terminal NLS) with importin alpha/beta. In terms of assembly, interacts (via PPxY motif) with host NEDD4 ubiquitine ligase; this interaction might play a role in virus intracellular transport during entry. Part of a complex composed of the core-capsid bridging protein, the endosome lysis protein VI and the hexon-linking protein VIII; these interactions bridge the virus core to the capsid. Interacts with peripentonal hexons; this interaction stabilizes the capsid by gluing two peripentonal hexons together and joining them with an adjacent group-of-nine hexon. Heterodimer with the viral protease; disulfide-linked. Interacts with the viral protease. In terms of processing, ubiquitinated by Nedd4 following partial capsid disassembly; which might play a role in intracellular virus movement during entry. Post-translationally, contains the major nuclear import and export signals. Proteolytically removed during virion maturation. The processing of the C-terminus turns the precursor into a mature viral structural protein and abrogates its ability to promote hexon import and act as a potential chaperone protein.

The protein resides in the host nucleus. It is found in the host cytoplasm. It localises to the virion. During virus assembly, promotes hexon trimers nuclear import through nuclear pore complexes via an importin alpha/beta-dependent mechanism. By analogy to herpesviruses capsid assembly, might act as a chaperone to promote the formation of the icosahedral capsid. Its function is as follows. Structural component of the virion that provides increased stability to the particle shell through its interaction with the core-capsid bridging protein and the hexon-linking protein VIII. Fibers shedding during virus entry into host cell allows the endosome lysis protein to be exposed as a membrane-lytic peptide. Exhibits pH-independent membrane fragmentation activity and probably mediates viral rapid escape from host endosome via organellar membrane lysis. It is not clear if it then remains partially associated with the capsid and involved in the intracellular microtubule-dependent transport of capsid to the nucleus, or if it is lost during endosomal penetration. Functionally, cofactor that activates the viral protease. Binds to viral protease in a 1:1 ratio. This Human adenovirus A serotype 12 (HAdV-12) protein is Pre-protein VI.